We begin with the raw amino-acid sequence, 820 residues long: Phenylalanine--tRNA ligase beta subunit (820 aa).

A tRNA-binding domain is found at 39-150; that stretch reads PAPVGGVLLV…GTAAPGTPLR (112 aa). The 76-residue stretch at 435–510 folds into the B5 domain; that stretch reads EVPQTITTTG…RLHGFTELPE (76 aa). Mg(2+) is bound by residues Asp-488, Asp-494, Glu-497, and Glu-498. The 92-residue stretch at 727–818 folds into the FDX-ACB domain; the sequence is SRAPAAWRDL…AVKARGWAIR (92 aa).

This sequence belongs to the phenylalanyl-tRNA synthetase beta subunit family. Type 1 subfamily. Tetramer of two alpha and two beta subunits. It depends on Mg(2+) as a cofactor.

Its subcellular location is the cytoplasm. The catalysed reaction is tRNA(Phe) + L-phenylalanine + ATP = L-phenylalanyl-tRNA(Phe) + AMP + diphosphate + H(+). In Deinococcus radiodurans (strain ATCC 13939 / DSM 20539 / JCM 16871 / CCUG 27074 / LMG 4051 / NBRC 15346 / NCIMB 9279 / VKM B-1422 / R1), this protein is Phenylalanine--tRNA ligase beta subunit (pheT).